We begin with the raw amino-acid sequence, 157 residues long: MIRVATAECFTHGFVAREIHAYSMGYPGGYSWSVDSDVVLVAGLFIPTLSGIRSILKFEPPEPSATLNDIKVYTEEEDERVALMMARSVRELTSADLGIGTTAGIGRGGIAVVSENREEVINSDVEADLRFSGAEEILMRQRSGIRCALELLESFLE.

It belongs to the UPF0254 family.

This is UPF0254 protein MTH_1148 from Methanothermobacter thermautotrophicus (strain ATCC 29096 / DSM 1053 / JCM 10044 / NBRC 100330 / Delta H) (Methanobacterium thermoautotrophicum).